A 314-amino-acid polypeptide reads, in one-letter code: Bis(5'-nucleosyl)-tetraphosphatase, symmetrical (314 aa).

The interval 267 to 314 (QVPGNPITHPPKTAQRPRQPRRRQRQRGGDQAQTGPAPTPASTGPAGG) is disordered. Residues 297-314 (QAQTGPAPTPASTGPAGG) are compositionally biased toward low complexity.

It belongs to the Ap4A hydrolase family.

It carries out the reaction P(1),P(4)-bis(5'-adenosyl) tetraphosphate + H2O = 2 ADP + 2 H(+). In terms of biological role, hydrolyzes diadenosine 5',5'''-P1,P4-tetraphosphate to yield ADP. This Xanthomonas axonopodis pv. citri (strain 306) protein is Bis(5'-nucleosyl)-tetraphosphatase, symmetrical.